Reading from the N-terminus, the 309-residue chain is Cytochrome c biogenesis protein CcsA (309 aa).

8 consecutive transmembrane segments (helical) span residues 18–38 (LGLLVFYFLLINLPISLGAVF), 48–68 (LITILVNLLITLQLLFRWSIS), 73–93 (ISNLYESLYFLTWGITLGQLL), 102–122 (IIPSIAIPIELLTVAFACFVL), 148–168 (VMLSYAALIIGSLLSMSVLFI), 216–236 (SILVGFVLLTLGLISGAVWAN), 250–267 (TWAFISWLFYAAYLHMRI), and 279–299 (LASTGFLVVLVCYLGVNFLGI).

This sequence belongs to the CcmF/CycK/Ccl1/NrfE/CcsA family. As to quaternary structure, may interact with ccs1.

It localises to the cellular thylakoid membrane. In terms of biological role, required during biogenesis of c-type cytochromes (cytochrome c6 and cytochrome f) at the step of heme attachment. This Prochlorococcus marinus (strain AS9601) protein is Cytochrome c biogenesis protein CcsA.